The chain runs to 340 residues: Phosphoribosylformylglycinamidine cyclo-ligase (340 aa).

This sequence belongs to the AIR synthase family.

It is found in the cytoplasm. The enzyme catalyses 2-formamido-N(1)-(5-O-phospho-beta-D-ribosyl)acetamidine + ATP = 5-amino-1-(5-phospho-beta-D-ribosyl)imidazole + ADP + phosphate + H(+). The protein operates within purine metabolism; IMP biosynthesis via de novo pathway; 5-amino-1-(5-phospho-D-ribosyl)imidazole from N(2)-formyl-N(1)-(5-phospho-D-ribosyl)glycinamide: step 2/2. This is Phosphoribosylformylglycinamidine cyclo-ligase from Lactococcus lactis subsp. cremoris (strain MG1363).